The following is a 278-amino-acid chain: Pantothenate synthetase (278 aa).

Residue 30–37 (MGFLHEGH) participates in ATP binding. The active-site Proton donor is His37. Gln61 contacts (R)-pantoate. Residue Gln61 coordinates beta-alanine. 147–150 (GQKD) provides a ligand contact to ATP. Gln153 provides a ligand contact to (R)-pantoate. Residues Val176 and 184–187 (LSSR) each bind ATP.

It belongs to the pantothenate synthetase family. Homodimer.

The protein resides in the cytoplasm. It catalyses the reaction (R)-pantoate + beta-alanine + ATP = (R)-pantothenate + AMP + diphosphate + H(+). It functions in the pathway cofactor biosynthesis; (R)-pantothenate biosynthesis; (R)-pantothenate from (R)-pantoate and beta-alanine: step 1/1. Catalyzes the condensation of pantoate with beta-alanine in an ATP-dependent reaction via a pantoyl-adenylate intermediate. The sequence is that of Pantothenate synthetase from Thermosipho africanus (strain TCF52B).